The sequence spans 82 residues: Cytochrome c oxidase subunit 8, mitochondrial (82 aa).

Residues 1 to 31 constitute a mitochondrion transit peptide; sequence MFSRVALRAAPRQQPFSLVARRTFQTTRAQL. The Mitochondrial matrix portion of the chain corresponds to 32–52; that stretch reads SSPYHYPEGPRSNLPFNPKTR. Residues 53–75 form a helical membrane-spanning segment; sequence FFWFRYLMYCVVGFGSPVAIAVW. The Mitochondrial intermembrane portion of the chain corresponds to 76–82; it reads QTYRPRS.

The protein belongs to the cytochrome c oxidase VIIc family. As to quaternary structure, component of the cytochrome c oxidase (complex IV, CIV), a multisubunit enzyme composed of 11 subunits. The complex is composed of a catalytic core of 3 subunits Cox1, Cox2 and Cox3, encoded in the mitochondrial DNA, and 8 supernumerary subunits Cox4, Cox5a/Cox5, Cox6, Cox7, Cox8, Cox7a/Cox9, Cox6b/Cox12 and Cox6a/Cox13, which are encoded in the nuclear genome. The complex exists as a monomer or a dimer and forms respiratory supercomplexes (SCs) in the inner mitochondrial membrane with NADH-ubiquinone oxidoreductase (complex I, CI) and ubiquinol-cytochrome c oxidoreductase (cytochrome b-c1 complex, complex III, CIII), resulting in various different assemblies (supercomplexes I(1)IV(1), I(1)III(3)IV(2), III(2)IV(1) and III(2)IV(2) as well as larger supercomplexes of compositions like I(1)III(2)IV(5-6)).

It localises to the mitochondrion inner membrane. It functions in the pathway energy metabolism; oxidative phosphorylation. In terms of biological role, component of the cytochrome c oxidase, the last enzyme in the mitochondrial electron transport chain which drives oxidative phosphorylation. The respiratory chain contains 3 multisubunit complexes succinate dehydrogenase (complex II, CII), ubiquinol-cytochrome c oxidoreductase (cytochrome b-c1 complex, complex III, CIII) and cytochrome c oxidase (complex IV, CIV), that cooperate to transfer electrons derived from NADH and succinate to molecular oxygen, creating an electrochemical gradient over the inner membrane that drives transmembrane transport and the ATP synthase. Cytochrome c oxidase is the component of the respiratory chain that catalyzes the reduction of oxygen to water. Electrons originating from reduced cytochrome c in the intermembrane space (IMS) are transferred via the dinuclear copper A center (CU(A)) of Cox2 and heme A of Cox1 to the active site in Cox1, a binuclear center (BNC) formed by heme A3 and copper B (CU(B)). The BNC reduces molecular oxygen to 2 water molecules using 4 electrons from cytochrome c in the IMS and 4 protons from the mitochondrial matrix. This Neurospora crassa (strain ATCC 24698 / 74-OR23-1A / CBS 708.71 / DSM 1257 / FGSC 987) protein is Cytochrome c oxidase subunit 8, mitochondrial (cox-15).